The chain runs to 175 residues: Epididymal-specific lipocalin-8 (175 aa).

Positions 1–25 (MPGAAEALPTVTVTLVAGAVPPASG) are cleaved as a signal peptide. Residues Asn-66 and Asn-74 are each glycosylated (N-linked (GlcNAc...) asparagine). The cysteines at positions 79 and 166 are disulfide-linked.

Belongs to the calycin superfamily. Lipocalin family.

It localises to the secreted. Its function is as follows. May play a role in male fertility. May act as a retinoid carrier protein within the epididymis. The protein is Epididymal-specific lipocalin-8 (LCN8) of Homo sapiens (Human).